We begin with the raw amino-acid sequence, 215 residues long: 16S rRNA (adenine(1408)-N(1))-methyltransferase (215 aa).

Residues Gly32, Asp55, 87 to 88 (AE), 102 to 107 (LMPWGS), and 191 to 193 (TSW) each bind S-adenosyl-L-methionine.

This sequence belongs to the methyltransferase superfamily. Kanamycin-apramycin resistance family.

It catalyses the reaction adenosine(1408) in 16S rRNA + S-adenosyl-L-methionine = N(1)-methyladenosine(1408) in 16S rRNA + S-adenosyl-L-homocysteine + H(+). Specifically methylates the N(1) position of adenine 1408 in 16S rRNA. Confers resistance to various aminoglycosides. In Streptoalloteichus hindustanus, this protein is 16S rRNA (adenine(1408)-N(1))-methyltransferase (kamB).